The chain runs to 503 residues: Glycoprotein 3-alpha-L-fucosyltransferase A (503 aa).

Residues Met-1–Lys-10 are Cytoplasmic-facing. A helical; Signal-anchor for type II membrane protein membrane pass occupies residues Tyr-11–Leu-28. Over Lys-29–Asp-503 the chain is Lumenal. A disordered region spans residues Ile-44 to Thr-71. A compositionally biased stretch (low complexity) spans Gln-47–Gln-58. N-linked (GlcNAc...) asparagine glycosylation is found at Asn-262, Asn-295, and Asn-299.

It belongs to the glycosyltransferase 10 family. It depends on Mn(2+) as a cofactor.

The protein localises to the golgi apparatus. Its subcellular location is the golgi stack membrane. The catalysed reaction is N(4)-{beta-D-GlcNAc-(1-&gt;2)-alpha-D-Man-(1-&gt;3)-[beta-D-GlcNAc-(1-&gt;2)-alpha-D-Man-(1-&gt;6)]-beta-D-Man-(1-&gt;4)-beta-D-GlcNAc-(1-&gt;4)-beta-D-GlcNAc}-L-asparaginyl-[protein] + GDP-beta-L-fucose = N(4)-{beta-D-GlcNAc-(1-&gt;2)-alpha-D-Man-(1-&gt;3)-[beta-D-GlcNAc-(1-&gt;2)-alpha-D-Man-(1-&gt;6)]-beta-D-Man-(1-&gt;4)-beta-D-GlcNAc-(1-&gt;4)-[alpha-L-Fuc(1-&gt;3)]-beta-D-GlcNAc}-L-asparaginyl-[protein] + GDP + H(+). Its pathway is protein modification; protein glycosylation. Functionally, catalyzes alpha-1,3 glycosidic linkages of N-glycans. Plays a role in neuronal development by promoting ventral nerve cord formation, possibly by promoting interactions between migrating cells and the extracellular matrix or by promoting neural activity. This chain is Glycoprotein 3-alpha-L-fucosyltransferase A (FucTA), found in Drosophila melanogaster (Fruit fly).